The sequence spans 2641 residues: Prosolanapyrone synthase (2641 aa).

The Ketosynthase family 3 (KS3) domain maps to 14–440 (PEPIAIVGMG…GANGHCIIDD (427 aa)). Catalysis depends on for beta-ketoacyl synthase activity residues C187, H323, and H363. Residues 456–515 (SIGHINGHTNGHTNGHTNGHTNGHTNGHTNGHTNGAHASDGHNGHHQNGMNGNSASHMSE) are disordered. Positions 461–490 (NGHTNGHTNGHTNGHTNGHTNGHTNGHTNG) are enriched in low complexity. The malonyl-CoA:ACP transacylase (MAT) stretch occupies residues 619–920 (FVFTGQGAQW…KGPVGQISRS (302 aa)). The tract at residues 1011-1149 (HDLLGSKLPG…GRVRVIAGTS (139 aa)) is N-terminal hotdog fold. The segment at 1011 to 1309 (HDLLGSKLPG…GNLRCVTYTE (299 aa)) is dehydratase (DH) domain. Residues 1011–1313 (HDLLGSKLPG…CVTYTEVLPS (303 aa)) form the PKS/mFAS DH domain. The active-site Proton acceptor; for dehydratase activity is H1043. The interval 1161–1313 (ARTLDTKAWY…CVTYTEVLPS (153 aa)) is C-terminal hotdog fold. Residue D1227 is the Proton donor; for dehydratase activity of the active site. Positions 1477–1665 (TGAYPQLVRF…GAELVLDDYP (189 aa)) are methyltransferase (MT) domain. The enoyl reductase (ER) domain stretch occupies residues 1894 to 2206 (GLLTSLYFKP…KGTHVGKLVV (313 aa)). The segment at 2231-2408 (NYLITGGLGG…STVSFGLIRD (178 aa)) is ketoreductase (KR) domain. Residues 2561-2639 (RTVALVTDAI…ILANKIVDGA (79 aa)) form the Carrier domain. An O-(pantetheine 4'-phosphoryl)serine modification is found at S2598.

It participates in phytotoxin biosynthesis. Functionally, prosolanapyrone synthase; part of the gene cluster that mediates the biosynthesis of the phytotoxin solanapyrone, a causal agent of early blight disease of potato and tomato. The prosolanapyrone synthase sol1 is a polyketide synthase that produces the octaketide desmethylprosolanapyrone I via sequential condensations of 7 malonyl-CoA units with one acetyl-CoA unit, and one methylation step. The octaketide backbone is further methylated by the sol2 O-methyltransferase to yield prosolanapyrone I. Prosolanapyrone I is hydroxylated to prosolanapyrone II by the cytochrome P450 monooxygenase sol6. The solanapyrone synthase sol5 then catalyzes the oxidation of prosolanapyrone II and the subsequent Diels Alder cycloisomerization of the product prosolanapyrone III to solanapyrones A and D. Solanapyrones A and D are then converted into solanapyrones B and E, respectively, by the sol3 dehydrogenase. This is Prosolanapyrone synthase (sol1) from Alternaria solani.